The following is a 427-amino-acid chain: 4-hydroxy-3-methylbut-2-en-1-yl diphosphate synthase (flavodoxin) (427 aa).

The interval M1–T21 is disordered. 4 residues coordinate [4Fe-4S] cluster: C310, C313, C356, and E363.

The protein belongs to the IspG family. Requires [4Fe-4S] cluster as cofactor.

It carries out the reaction (2E)-4-hydroxy-3-methylbut-2-enyl diphosphate + oxidized [flavodoxin] + H2O + 2 H(+) = 2-C-methyl-D-erythritol 2,4-cyclic diphosphate + reduced [flavodoxin]. It functions in the pathway isoprenoid biosynthesis; isopentenyl diphosphate biosynthesis via DXP pathway; isopentenyl diphosphate from 1-deoxy-D-xylulose 5-phosphate: step 5/6. In terms of biological role, converts 2C-methyl-D-erythritol 2,4-cyclodiphosphate (ME-2,4cPP) into 1-hydroxy-2-methyl-2-(E)-butenyl 4-diphosphate. The chain is 4-hydroxy-3-methylbut-2-en-1-yl diphosphate synthase (flavodoxin) from Bradyrhizobium diazoefficiens (strain JCM 10833 / BCRC 13528 / IAM 13628 / NBRC 14792 / USDA 110).